The sequence spans 661 residues: Transketolase (661 aa).

Ser-2 is subject to N-acetylserine. His-31 contributes to the substrate binding site. Thiamine diphosphate-binding positions include His-71 and 119–121; that span reads GPL. Residue Asp-160 coordinates Mg(2+). Positions 161 and 190 each coordinate thiamine diphosphate. Asn-190 and Val-192 together coordinate Mg(2+). Substrate is bound by residues His-267, Arg-359, and Ser-386. His-267 contacts thiamine diphosphate. Catalysis depends on Glu-413, which acts as the Proton donor. A thiamine diphosphate-binding site is contributed by Phe-439. Substrate contacts are provided by His-463, Asp-471, and Arg-522.

Belongs to the transketolase family. In terms of assembly, homodimer. Mg(2+) is required as a cofactor. Requires Ca(2+) as cofactor. Mn(2+) serves as cofactor. The cofactor is Co(2+). It depends on thiamine diphosphate as a cofactor.

It carries out the reaction D-sedoheptulose 7-phosphate + D-glyceraldehyde 3-phosphate = aldehydo-D-ribose 5-phosphate + D-xylulose 5-phosphate. Its function is as follows. Catalyzes the transfer of a two-carbon ketol group from a ketose donor to an aldose acceptor, via a covalent intermediate with the cofactor thiamine pyrophosphate. The protein is Transketolase (tkt-1) of Dictyostelium discoideum (Social amoeba).